The chain runs to 266 residues: uncharacterized protein (266 aa).

4 helical membrane-spanning segments follow: residues 9 to 29, 79 to 99, 122 to 142, and 193 to 213; these read IFII…IELP, GIMT…INPF, LSVM…MLSG, and GWYL…MVFI.

The protein resides in the membrane. This is an uncharacterized protein from Dictyostelium discoideum (Social amoeba).